A 286-amino-acid chain; its full sequence is Aquaporin NIP1-3 (286 aa).

The tract at residues 1 to 44 (MAGGEHGVNGQHEETRAMEEGSRDHQARCENSEQDGGSKSSSNN) is disordered. The segment covering 11-31 (QHEETRAMEEGSRDHQARCEN) has biased composition (basic and acidic residues). Residues 34–44 (QDGGSKSSSNN) are compositionally biased toward polar residues. Helical transmembrane passes span 56-76 (VIAE…AVAV) and 84-104 (VTFP…VYSV). An NPA 1 motif is present at residues 113–115 (NPA). The next 3 membrane-spanning stretches (helical) occupy residues 131–153 (VPAY…RALF), 172–192 (SLAM…GVAT), and 200–220 (LAGL…GPIS). The NPA 2 signature appears at 225-227 (NPA). The helical transmembrane segment at 239–259 (YTGIWVYIAGPVFGAVAGAWA) threads the bilayer.

Belongs to the MIP/aquaporin (TC 1.A.8) family. NIP (TC 1.A.8.12) subfamily.

Its subcellular location is the membrane. In terms of biological role, aquaporins facilitate the transport of water and small neutral solutes across cell membranes. This Oryza sativa subsp. japonica (Rice) protein is Aquaporin NIP1-3 (NIP1-3).